The sequence spans 1069 residues: Acyl-CoA dehydrogenase family member 10 (1069 aa).

Lys413 is subject to N6-succinyllysine. Lys427 is subject to N6-acetyllysine; alternate. Lys427 is subject to N6-succinyllysine; alternate. FAD is bound by residues 792–802, Ser828, Arg943, Gln1013, and Glu1044; that span reads FAMTEPQVASS. N6-acetyllysine; alternate is present on Lys1052. Residue Lys1052 is modified to N6-succinyllysine; alternate.

Belongs to the acyl-CoA dehydrogenase family. FAD serves as cofactor.

The catalysed reaction is a 2,3-saturated acyl-CoA + A = a 2,3-dehydroacyl-CoA + AH2. In terms of biological role, acyl-CoA dehydrogenase only active with R- and S-2-methyl-C15-CoA. The protein is Acyl-CoA dehydrogenase family member 10 (Acad10) of Mus musculus (Mouse).